We begin with the raw amino-acid sequence, 69 residues long: UPF0337 protein YjbJ (69 aa).

This sequence belongs to the UPF0337 (CsbD) family.

This Escherichia coli O157:H7 protein is UPF0337 protein YjbJ (yjbJ).